Consider the following 301-residue polypeptide: Peptidyl-prolyl cis-trans isomerase E (301 aa).

The RRM domain maps to 5–83; it reads KRVLYVGGLA…GRTIRVNLAK (79 aa). A phosphoserine mark is found at S91, S97, and S119. The disordered stretch occupies residues 107 to 140; sequence GKTLEENKEEEGSEPPKAETQEGEPAAKKARSNP. Positions 143-299 constitute a PPIase cyclophilin-type domain; sequence YMDIKIGNKP…QKVIIADCGE (157 aa).

It belongs to the cyclophilin-type PPIase family. PPIase E subfamily. Identified in the spliceosome C complex. Component of the XAB2 complex, a multimeric protein complex composed of XAB2, PRPF19, AQR, ZNF830, ISY1, and PPIE. Identified in a pentameric intron-binding (IB) complex composed of AQR, XAB2, ISY1, ZNF830 and PPIE that is incorporated into the spliceosome as a preassembled complex. The IB complex does not contain PRPF19. Interacts (via RNA-binding domain) with KMT2A (via the third PHD-type zinc-finger).

The protein resides in the nucleus. It catalyses the reaction [protein]-peptidylproline (omega=180) = [protein]-peptidylproline (omega=0). Its function is as follows. Involved in pre-mRNA splicing as component of the spliceosome. Combines RNA-binding and PPIase activities. Binds mRNA and has a preference for single-stranded RNA molecules with poly-A and poly-U stretches, suggesting it binds to the poly(A)-region in the 3'-UTR of mRNA molecules. Catalyzes the cis-trans isomerization of proline imidic peptide bonds in proteins. Inhibits KMT2A activity; this requires proline isomerase activity. The chain is Peptidyl-prolyl cis-trans isomerase E (PPIE) from Pongo abelii (Sumatran orangutan).